The chain runs to 388 residues: MFSLIGAKRQAIGIAALAWSTGAVMASEHWPDLPVGIKNGAAARIGNMAYVGLGSAGTDFYALDLNNPSKGWVKRANFIGPATNGAAMAAAGGKIFAFSGNGKATPDAKSPIIFDTAYVYDPGSDGWSKLDTQTPVGLSGAKAVGLADGRIAIFGGYNKELFDKYLADVGAIDKDKEPEAYRKLVDSYMGMKPEAYRWNDEVLVYDPAGNNWGSLGANPFLPNCDPAMATMGEGDFLLVSGGIKPGLRTPEAKLVKIRDGAAHWQKVSDLPPLSSSEPQEGVAGAYAGKAGDDVLVAGGANFKGAQANAAAGKWFAHDGLAKSWRDDVYAFDGKDWKVAGKLPRGLAYGAAFDAPGGLLVVGGEDRDGKARKEVFLLKWDGKALSVEN.

An N-terminal signal peptide occupies residues 1–26 (MFSLIGAKRQAIGIAALAWSTGAVMA). Kelch repeat units follow at residues 48–92 (MAYV…AAAG), 94–147 (KIFA…VGLA), 149–186 (GRIAIFGGYNKELFDKYLADVGAIDKDKEPEAYRKLVD), 187–232 (SYMG…ATMG), 236–285 (FLLV…VAGA), 307–356 (ANAA…DAPG), and 358–387 (LLVVGGEDRDGKARKEVFLLKWDGKALSVE).

Belongs to the NanM family. As to quaternary structure, homodimer.

The protein resides in the periplasm. The catalysed reaction is N-acetyl-alpha-neuraminate = N-acetyl-beta-neuraminate. Its function is as follows. Converts alpha-N-acetylneuranimic acid (Neu5Ac) to the beta-anomer, accelerating the equilibrium between the alpha- and beta-anomers. Probably facilitates sialidase-negative bacteria to compete successfully for limited amounts of extracellular Neu5Ac, which is likely taken up in the beta-anomer. In addition, the rapid removal of sialic acid from solution might be advantageous to the bacterium to damp down host responses. This chain is N-acetylneuraminate epimerase, found in Brucella suis (strain ATCC 23445 / NCTC 10510).